We begin with the raw amino-acid sequence, 117 residues long: Probable prefoldin subunit 1 (117 aa).

This sequence belongs to the prefoldin subunit beta family. As to quaternary structure, heterohexamer of two PFD-alpha type and four PFD-beta type subunits. In terms of tissue distribution, expressed in the distal cell tip of developing embryos.

The protein resides in the cytoplasm. Functionally, binds specifically to cytosolic chaperonin (c-CPN) and transfers target proteins to it. Binds to nascent polypeptide chain and promotes folding in an environment in which there are many competing pathways for nonnative proteins. Has a role in gonadogenesis. The polypeptide is Probable prefoldin subunit 1 (pfd-1) (Caenorhabditis elegans).